The sequence spans 239 residues: Increased recombination centers protein 22-1 (239 aa).

The signal sequence occupies residues methionine 1 to glycine 19. At tyrosine 20 to leucine 161 the chain is on the lumenal side. The chain crosses the membrane as a helical span at residues isoleucine 162 to isoleucine 182. The Cytoplasmic portion of the chain corresponds to tryptophan 183–asparagine 239. Over residues alanine 201 to serine 213 the composition is skewed to low complexity. Residues alanine 201–threonine 222 form a disordered region.

Belongs to the IRC22 family.

Its subcellular location is the endoplasmic reticulum membrane. Is probably involved in a pathway contributing to genomic integrity. The polypeptide is Increased recombination centers protein 22-1 (IRC22-1) (Candida albicans (strain SC5314 / ATCC MYA-2876) (Yeast)).